Consider the following 872-residue polypeptide: Valine--tRNA ligase (872 aa).

Residues 45 to 55 (PYPTGNLHIGN) carry the 'HIGH' region motif. The 'KMSKS' region motif lies at 524–528 (KMSKS). Residue Lys-527 coordinates ATP.

This sequence belongs to the class-I aminoacyl-tRNA synthetase family. ValS type 2 subfamily.

The protein resides in the cytoplasm. The catalysed reaction is tRNA(Val) + L-valine + ATP = L-valyl-tRNA(Val) + AMP + diphosphate. Its function is as follows. Catalyzes the attachment of valine to tRNA(Val). As ValRS can inadvertently accommodate and process structurally similar amino acids such as threonine, to avoid such errors, it has a 'posttransfer' editing activity that hydrolyzes mischarged Thr-tRNA(Val) in a tRNA-dependent manner. The chain is Valine--tRNA ligase from Natronomonas pharaonis (strain ATCC 35678 / DSM 2160 / CIP 103997 / JCM 8858 / NBRC 14720 / NCIMB 2260 / Gabara) (Halobacterium pharaonis).